A 152-amino-acid chain; its full sequence is Transcriptional regulator MraZ (152 aa).

2 consecutive SpoVT-AbrB domains span residues 5 to 52 (ASAI…PIHE) and 81 to 124 (AHEV…DEQS).

Belongs to the MraZ family. As to quaternary structure, forms oligomers.

The protein localises to the cytoplasm. It localises to the nucleoid. The sequence is that of Transcriptional regulator MraZ from Shewanella baltica (strain OS195).